Here is a 308-residue protein sequence, read N- to C-terminus: uncharacterized protein (308 aa).

The signal sequence occupies residues 1–28 (MILMKKFEIILFLFIAVLIFVFGYFVGA).

This is an uncharacterized protein from Methanocaldococcus jannaschii (strain ATCC 43067 / DSM 2661 / JAL-1 / JCM 10045 / NBRC 100440) (Methanococcus jannaschii).